The chain runs to 226 residues: Ribonuclease 3 (226 aa).

The region spanning 7–129 (LPRLCRTLSY…IIGAVYLDSD (123 aa)) is the RNase III domain. Residue Glu42 participates in Mg(2+) binding. Residue Asp46 is part of the active site. Asp115 and Glu118 together coordinate Mg(2+). Residue Glu118 is part of the active site. Residues 156 to 226 (DAKTLLQEHL…AAQVLELLKK (71 aa)) enclose the DRBM domain.

The protein belongs to the ribonuclease III family. In terms of assembly, homodimer. It depends on Mg(2+) as a cofactor.

It localises to the cytoplasm. The catalysed reaction is Endonucleolytic cleavage to 5'-phosphomonoester.. Digests double-stranded RNA. Involved in the processing of primary rRNA transcript to yield the immediate precursors to the large and small rRNAs (23S and 16S). Processes some mRNAs, and tRNAs when they are encoded in the rRNA operon. Processes pre-crRNA and tracrRNA of type II CRISPR loci if present in the organism. The polypeptide is Ribonuclease 3 (Shewanella baltica (strain OS223)).